The primary structure comprises 206 residues: Cytochrome b-245 chaperone 1 homolog (206 aa).

The helical transmembrane segment at 21-43 (GIRSWSILVGIASVGLAAAYYSS) threads the bilayer. Residues 172-206 (ADDDYPDDDDGIEDLGLGDSSDSQDDPDGDDDEEH) form a disordered region. 2 stretches are compositionally biased toward acidic residues: residues 174–184 (DDYPDDDDGIE) and 193–206 (DSQD…DEEH).

Belongs to the CYBC1 family.

The protein resides in the endoplasmic reticulum membrane. Its function is as follows. Functions as a chaperone necessary for a stable expression of the CYBA and CYBB subunits of the cytochrome b-245 heterodimer. The chain is Cytochrome b-245 chaperone 1 homolog from Danio rerio (Zebrafish).